The following is a 223-amino-acid chain: Ribosome maturation factor RimM (223 aa).

Over residues methionine 1 to proline 12 the composition is skewed to low complexity. Disordered stretches follow at residues methionine 1–leucine 44 and valine 203–glycine 223. One can recognise a PRC barrel domain in the interval aspartate 135 to leucine 210.

Belongs to the RimM family. In terms of assembly, binds ribosomal protein uS19.

The protein resides in the cytoplasm. In terms of biological role, an accessory protein needed during the final step in the assembly of 30S ribosomal subunit, possibly for assembly of the head region. Essential for efficient processing of 16S rRNA. May be needed both before and after RbfA during the maturation of 16S rRNA. It has affinity for free ribosomal 30S subunits but not for 70S ribosomes. This Methylorubrum extorquens (strain CM4 / NCIMB 13688) (Methylobacterium extorquens) protein is Ribosome maturation factor RimM.